We begin with the raw amino-acid sequence, 365 residues long: DNA N6-methyl methyltransferase (365 aa).

The protein belongs to the MT-A70-like family.

It catalyses the reaction a 2'-deoxyadenosine in DNA + S-adenosyl-L-methionine = an N(6)-methyl-2'-deoxyadenosine in DNA + S-adenosyl-L-homocysteine + H(+). Methylates DNA on the 6th position of adenine (N(6)-methyladenosine). N(6)-methyladenosine (m6A) DNA is involved in epigenetic transgenerational inheritance. This chain is DNA N6-methyl methyltransferase, found in Caenorhabditis elegans.